The sequence spans 260 residues: 2-amino-5-formylamino-6-ribosylaminopyrimidin-4(3H)-one 5'-monophosphate deformylase (260 aa).

Positions 33, 35, 44, and 112 each coordinate Fe cation.

It belongs to the creatininase superfamily. FAPy deformylase family. As to quaternary structure, homodimer. It depends on Fe(2+) as a cofactor. Zn(2+) is required as a cofactor.

It carries out the reaction 2-amino-5-formylamino-6-(5-phospho-D-ribosylamino)pyrimidin-4(3H)-one + H2O = 2,5-diamino-6-(1-D-ribosylamino)pyrimidin-4(3H)-one 5'-phosphate + formate + H(+). The protein operates within cofactor biosynthesis; coenzyme F420 biosynthesis. It participates in cofactor biosynthesis; riboflavin biosynthesis. In terms of biological role, catalyzes the hydrolysis of the formamide of 2-amino-5-formylamino-6-ribosylamino-4(3H)-pyrimidinone 5'-monophosphate (FAPy) to form 2,5-diamino-6-ribosylamino-4(3H)-pyrimidinone 5'-phosphate (APy). This is 2-amino-5-formylamino-6-ribosylaminopyrimidin-4(3H)-one 5'-monophosphate deformylase from Methanococcus voltae (strain ATCC BAA-1334 / A3).